A 397-amino-acid chain; its full sequence is Transcription factor xenB (397 aa).

Positions Thr-220 to Ser-249 are disordered. The segment covering Arg-229–Glu-240 has biased composition (polar residues).

Functionally, transcription factor; part of the gene cluster that mediates the biosynthesis of xenoacremones such as xenoacremone A, a compound that shows inhibitory activity toward the PI3K/AKT signaling pathway and which has the ability to induce apoptosis of A549 lung cancer cells. Acts as a positive regulator of the xenoacremones biosynthesis gene cluster. This Xenoacremonium sinensis (Endophyte fungus) protein is Transcription factor xenB.